Consider the following 273-residue polypeptide: BTB and MATH domain-containing protein 15 (273 aa).

An MATH domain is found at E7–V123. A BTB domain is found at S147–Y206.

Interacts with cul-3.

It participates in protein modification; protein ubiquitination. Its function is as follows. Probable substrate-specific adapter of an E3 ubiquitin-protein ligase complex which mediates the ubiquitination and subsequent proteasomal degradation of target proteins. The chain is BTB and MATH domain-containing protein 15 (bath-15) from Caenorhabditis elegans.